We begin with the raw amino-acid sequence, 137 residues long: uncharacterized protein (137 aa).

This is an uncharacterized protein from Rickettsia prowazekii (strain Madrid E).